We begin with the raw amino-acid sequence, 493 residues long: 3-octaprenyl-4-hydroxybenzoate carboxy-lyase (493 aa).

Asn172 contributes to the Mn(2+) binding site. Prenylated FMN is bound by residues 175-177 (IYR), 189-191 (RWL), and 194-195 (RG). Glu238 contacts Mn(2+). Residue Asp287 is the Proton donor of the active site.

It belongs to the UbiD family. In terms of assembly, homohexamer. It depends on prenylated FMN as a cofactor. Mn(2+) is required as a cofactor.

The protein resides in the cell membrane. The catalysed reaction is a 4-hydroxy-3-(all-trans-polyprenyl)benzoate + H(+) = a 2-(all-trans-polyprenyl)phenol + CO2. The protein operates within cofactor biosynthesis; ubiquinone biosynthesis. In terms of biological role, catalyzes the decarboxylation of 3-octaprenyl-4-hydroxy benzoate to 2-octaprenylphenol, an intermediate step in ubiquinone biosynthesis. This is 3-octaprenyl-4-hydroxybenzoate carboxy-lyase from Shewanella denitrificans (strain OS217 / ATCC BAA-1090 / DSM 15013).